Consider the following 225-residue polypeptide: 2-C-methyl-D-erythritol 4-phosphate cytidylyltransferase (225 aa).

Belongs to the IspD/TarI cytidylyltransferase family. IspD subfamily.

The enzyme catalyses 2-C-methyl-D-erythritol 4-phosphate + CTP + H(+) = 4-CDP-2-C-methyl-D-erythritol + diphosphate. It participates in isoprenoid biosynthesis; isopentenyl diphosphate biosynthesis via DXP pathway; isopentenyl diphosphate from 1-deoxy-D-xylulose 5-phosphate: step 2/6. Its function is as follows. Catalyzes the formation of 4-diphosphocytidyl-2-C-methyl-D-erythritol from CTP and 2-C-methyl-D-erythritol 4-phosphate (MEP). The sequence is that of 2-C-methyl-D-erythritol 4-phosphate cytidylyltransferase from Prochlorococcus marinus (strain MIT 9313).